Here is a 364-residue protein sequence, read N- to C-terminus: UDP-N-acetylglucosamine--N-acetylmuramyl-(pentapeptide) pyrophosphoryl-undecaprenol N-acetylglucosamine transferase 1 (364 aa).

Residues 10 to 12 (TGG), Asn-124, Ser-195, Ile-250, and Gln-295 each bind UDP-N-acetyl-alpha-D-glucosamine.

This sequence belongs to the glycosyltransferase 28 family. MurG subfamily.

The protein localises to the cell membrane. The enzyme catalyses di-trans,octa-cis-undecaprenyl diphospho-N-acetyl-alpha-D-muramoyl-L-alanyl-D-glutamyl-meso-2,6-diaminopimeloyl-D-alanyl-D-alanine + UDP-N-acetyl-alpha-D-glucosamine = di-trans,octa-cis-undecaprenyl diphospho-[N-acetyl-alpha-D-glucosaminyl-(1-&gt;4)]-N-acetyl-alpha-D-muramoyl-L-alanyl-D-glutamyl-meso-2,6-diaminopimeloyl-D-alanyl-D-alanine + UDP + H(+). Its pathway is cell wall biogenesis; peptidoglycan biosynthesis. Functionally, cell wall formation. Catalyzes the transfer of a GlcNAc subunit on undecaprenyl-pyrophosphoryl-MurNAc-pentapeptide (lipid intermediate I) to form undecaprenyl-pyrophosphoryl-MurNAc-(pentapeptide)GlcNAc (lipid intermediate II). The sequence is that of UDP-N-acetylglucosamine--N-acetylmuramyl-(pentapeptide) pyrophosphoryl-undecaprenol N-acetylglucosamine transferase 1 from Bacillus anthracis.